Consider the following 365-residue polypeptide: Alanine racemase (365 aa).

The active-site Proton acceptor; specific for D-alanine is the Lys32. Lys32 carries the N6-(pyridoxal phosphate)lysine modification. Position 128 (Arg128) interacts with substrate. Tyr257 acts as the Proton acceptor; specific for L-alanine in catalysis. Met305 lines the substrate pocket.

This sequence belongs to the alanine racemase family. Requires pyridoxal 5'-phosphate as cofactor.

It catalyses the reaction L-alanine = D-alanine. It participates in amino-acid biosynthesis; D-alanine biosynthesis; D-alanine from L-alanine: step 1/1. Catalyzes the interconversion of L-alanine and D-alanine. May also act on other amino acids. This chain is Alanine racemase (alr), found in Francisella tularensis subsp. mediasiatica (strain FSC147).